The sequence spans 248 residues: Phycocyanobilin:ferredoxin oxidoreductase (248 aa).

This sequence belongs to the HY2 family.

It carries out the reaction (2R,3Z)-phycocyanobilin + 4 oxidized [2Fe-2S]-[ferredoxin] = biliverdin IXalpha + 4 reduced [2Fe-2S]-[ferredoxin] + 4 H(+). Its function is as follows. Catalyzes the four-electron reduction of biliverdin IX-alpha (2-electron reduction at both the A and D rings); the reaction proceeds via an isolatable 2-electron intermediate, 181,182-dihydrobiliverdin. The protein is Phycocyanobilin:ferredoxin oxidoreductase of Synechococcus sp. (strain ATCC 27144 / PCC 6301 / SAUG 1402/1) (Anacystis nidulans).